We begin with the raw amino-acid sequence, 265 residues long: GGVLKDTIQMIHGPLGCAYDTWHTKRYPTDNGHFNMKYVWSTDMKESHVVFGGEKRLEKSMHEAFDEMPDIKRMIVYTTCPTALIGDDIKAVAKKVMKDRPDVDVFTVECPGFSGVSQSKGHHVLNIGWINEKVETMEKEITSEYTMNFIGDFNIQGDTQLLQTYWDRLGIQVVAHFTGNGTYDDLRCMHQAQLNVVNCARSSGYIANELKKRYGIPRLDIDSWGFNYMAEGIRKICAFFGIEEKGEELIAEEYAKWKPKLDWYK.

Positions 17 and 80 each coordinate [8Fe-7S] cluster. Cys199 is a [7Fe-V-9S-C-homocitryl] cluster binding site.

It belongs to the NifD/NifK/NifE/NifN family. As to quaternary structure, hexamer of two alpha, two beta, and two delta chains. [8Fe-7S] cluster serves as cofactor. It depends on [7Fe-V-9S-C-homocitryl] cluster as a cofactor.

It carries out the reaction N2 + 8 reduced [2Fe-2S]-[ferredoxin] + 16 ATP + 16 H2O = H2 + 8 oxidized [2Fe-2S]-[ferredoxin] + 2 NH4(+) + 16 ADP + 16 phosphate + 6 H(+). Its function is as follows. This vanadium-iron protein is part of the nitrogenase complex that catalyzes the key enzymatic reactions in nitrogen fixation. This is Nitrogenase vanadium-iron protein alpha chain (vnfD) from Azorhizophilus paspali (Azotobacter paspali).